We begin with the raw amino-acid sequence, 122 residues long: UPF0102 protein NGR_c36770 (122 aa).

This sequence belongs to the UPF0102 family.

This Sinorhizobium fredii (strain NBRC 101917 / NGR234) protein is UPF0102 protein NGR_c36770.